Reading from the N-terminus, the 261-residue chain is Enolase-phosphatase E1 (261 aa).

Mg(2+) is bound by residues Asp-16 and Glu-18. Substrate contacts are provided by residues 153–154 and Lys-187; that span reads SS. Asp-212 is a binding site for Mg(2+).

It belongs to the HAD-like hydrolase superfamily. MasA/MtnC family. As to quaternary structure, monomer. Requires Mg(2+) as cofactor.

The protein resides in the cytoplasm. It is found in the nucleus. It carries out the reaction 5-methylsulfanyl-2,3-dioxopentyl phosphate + H2O = 1,2-dihydroxy-5-(methylsulfanyl)pent-1-en-3-one + phosphate. It participates in amino-acid biosynthesis; L-methionine biosynthesis via salvage pathway; L-methionine from S-methyl-5-thio-alpha-D-ribose 1-phosphate: step 3/6. It functions in the pathway amino-acid biosynthesis; L-methionine biosynthesis via salvage pathway; L-methionine from S-methyl-5-thio-alpha-D-ribose 1-phosphate: step 4/6. Bifunctional enzyme that catalyzes the enolization of 2,3-diketo-5-methylthiopentyl-1-phosphate (DK-MTP-1-P) into the intermediate 2-hydroxy-3-keto-5-methylthiopentenyl-1-phosphate (HK-MTPenyl-1-P), which is then dephosphorylated to form the acireductone 1,2-dihydroxy-3-keto-5-methylthiopentene (DHK-MTPene). This is Enolase-phosphatase E1 from Homo sapiens (Human).